We begin with the raw amino-acid sequence, 335 residues long: Vitamin B12 import system permease protein BtuC (335 aa).

A run of 9 helical transmembrane segments spans residues 25–45 (LVVI…IWLW), 67–87 (LAVL…QALF), 95–114 (GLLG…VLLG), 118–140 (LPIW…LLLG), 153–173 (LLVG…AVYF), 200–220 (LVLA…VLNF), 243–263 (VLAI…ISFI), 286–306 (CALA…IALF), and 308–328 (AELP…IWLL).

The protein belongs to the binding-protein-dependent transport system permease family. FecCD subfamily. The complex is composed of two ATP-binding proteins (BtuD), two transmembrane proteins (BtuC) and a solute-binding protein (BtuF).

The protein resides in the cell inner membrane. Functionally, part of the ABC transporter complex BtuCDF involved in vitamin B12 import. Involved in the translocation of the substrate across the membrane. The polypeptide is Vitamin B12 import system permease protein BtuC (Yersinia enterocolitica serotype O:8 / biotype 1B (strain NCTC 13174 / 8081)).